The sequence spans 480 residues: Vinorine hydroxylase (480 aa).

Residues 3-23 (LLQILLAIAGLLAILLLQKQW) form a helical membrane-spanning segment. C418 lines the heme pocket.

The protein belongs to the cytochrome P450 family. The cofactor is heme. Mainly expressed in roots and, to a lesser extent, in leaves.

Its subcellular location is the membrane. It catalyses the reaction vinorine + reduced [NADPH--hemoprotein reductase] + O2 = vomilenine + oxidized [NADPH--hemoprotein reductase] + H2O + H(+). The enzyme catalyses vomilenine = perakine. It functions in the pathway alkaloid biosynthesis; ajmaline biosynthesis. In terms of biological role, a cytochrome P450 monooxygenase involved in the biosynthesis of ajmaline-type monoterpenoid indole alkaloids (MIAs) natural products, important plant-derived pharmaceuticals used in the therapy of heart disorders. Catalyzes the hydroxylation of vinorine to vomilenine, an intermediate chemical in the biosynthesis of ajmaline. Supports also vomilenine isomerization to perakine. This chain is Vinorine hydroxylase, found in Rauvolfia serpentina (Serpentine wood).